Reading from the N-terminus, the 386-residue chain is uncharacterized protein (386 aa).

The next 12 helical transmembrane spans lie at Val8–Ile28, Ile43–Val63, Phe79–Ile99, Ile102–Ile122, Ile134–Ala154, Met156–Ile176, Phe216–Tyr236, Asn241–Leu261, Leu272–Ser292, Phe297–Ala317, Ile342–Ile362, and Met365–Glu385.

The protein belongs to the major facilitator superfamily.

It is found in the cell membrane. This is an uncharacterized protein from Methanocaldococcus jannaschii (strain ATCC 43067 / DSM 2661 / JAL-1 / JCM 10045 / NBRC 100440) (Methanococcus jannaschii).